Consider the following 213-residue polypeptide: 3,4-dihydroxy-2-butanone 4-phosphate synthase (213 aa).

Residues 37 to 38 (RE), Asp42, 150 to 154 (RPGHT), and Glu174 each bind D-ribulose 5-phosphate. Residue Glu38 participates in Mg(2+) binding. His153 is a Mg(2+) binding site.

The protein belongs to the DHBP synthase family. In terms of assembly, homodimer. Mg(2+) is required as a cofactor. Mn(2+) serves as cofactor.

It carries out the reaction D-ribulose 5-phosphate = (2S)-2-hydroxy-3-oxobutyl phosphate + formate + H(+). Its pathway is cofactor biosynthesis; riboflavin biosynthesis; 2-hydroxy-3-oxobutyl phosphate from D-ribulose 5-phosphate: step 1/1. Catalyzes the conversion of D-ribulose 5-phosphate to formate and 3,4-dihydroxy-2-butanone 4-phosphate. In Clostridium botulinum (strain Langeland / NCTC 10281 / Type F), this protein is 3,4-dihydroxy-2-butanone 4-phosphate synthase.